The chain runs to 541 residues: Phosphoenolpyruvate carboxykinase (ATP) (541 aa).

The substrate site is built by Arg67, Tyr207, and Lys213. Residues Lys213, His232, and 248 to 256 (GLSGTGKTT) contribute to the ATP site. Mn(2+) is bound by residues Lys213 and His232. Asp269 provides a ligand contact to Mn(2+). Residues Glu297, Arg333, 449 to 450 (RI), and Thr455 each bind ATP. Arg333 provides a ligand contact to substrate.

This sequence belongs to the phosphoenolpyruvate carboxykinase (ATP) family. In terms of assembly, monomer. It depends on Mn(2+) as a cofactor.

The protein resides in the cytoplasm. It catalyses the reaction oxaloacetate + ATP = phosphoenolpyruvate + ADP + CO2. The protein operates within carbohydrate biosynthesis; gluconeogenesis. In terms of biological role, involved in the gluconeogenesis. Catalyzes the conversion of oxaloacetate (OAA) to phosphoenolpyruvate (PEP) through direct phosphoryl transfer between the nucleoside triphosphate and OAA. The chain is Phosphoenolpyruvate carboxykinase (ATP) from Aliivibrio salmonicida (strain LFI1238) (Vibrio salmonicida (strain LFI1238)).